Here is a 315-residue protein sequence, read N- to C-terminus: Methionyl-tRNA formyltransferase (315 aa).

A (6S)-5,6,7,8-tetrahydrofolate-binding site is contributed by Ser-113–Pro-116.

Belongs to the Fmt family.

The enzyme catalyses L-methionyl-tRNA(fMet) + (6R)-10-formyltetrahydrofolate = N-formyl-L-methionyl-tRNA(fMet) + (6S)-5,6,7,8-tetrahydrofolate + H(+). Functionally, attaches a formyl group to the free amino group of methionyl-tRNA(fMet). The formyl group appears to play a dual role in the initiator identity of N-formylmethionyl-tRNA by promoting its recognition by IF2 and preventing the misappropriation of this tRNA by the elongation apparatus. The chain is Methionyl-tRNA formyltransferase from Vibrio vulnificus (strain YJ016).